Reading from the N-terminus, the 95-residue chain is Co-chaperonin GroES (95 aa).

This sequence belongs to the GroES chaperonin family. In terms of assembly, heptamer of 7 subunits arranged in a ring. Interacts with the chaperonin GroEL.

It localises to the cytoplasm. Its function is as follows. Together with the chaperonin GroEL, plays an essential role in assisting protein folding. The GroEL-GroES system forms a nano-cage that allows encapsulation of the non-native substrate proteins and provides a physical environment optimized to promote and accelerate protein folding. GroES binds to the apical surface of the GroEL ring, thereby capping the opening of the GroEL channel. This chain is Co-chaperonin GroES, found in Clostridium botulinum (strain ATCC 19397 / Type A).